Consider the following 298-residue polypeptide: Formylmethanofuran--tetrahydromethanopterin formyltransferase (298 aa).

It belongs to the FTR family. As to quaternary structure, homotetramer.

The protein localises to the cytoplasm. It carries out the reaction N-formylmethanofuran + 5,6,7,8-tetrahydromethanopterin + H(+) = N(5)-formyl-5,6,7,8-tetrahydromethanopterin + methanofuran. The protein operates within one-carbon metabolism; formaldehyde degradation; formate from formaldehyde (H(4)MPT route): step 4/5. In terms of biological role, catalyzes the transfer of a formyl group from 5-formyl tetrahydromethanopterin (5-formyl-H(4)MPT) to methanofuran (MFR) to produce formylmethanofuran (formyl-MFR) and tetrahydromethanopterin (H(4)MPT). The protein is Formylmethanofuran--tetrahydromethanopterin formyltransferase of Methylococcus capsulatus (strain ATCC 33009 / NCIMB 11132 / Bath).